Reading from the N-terminus, the 233-residue chain is Small ribosomal subunit protein uS2 (233 aa).

This sequence belongs to the universal ribosomal protein uS2 family.

In Clostridium perfringens (strain ATCC 13124 / DSM 756 / JCM 1290 / NCIMB 6125 / NCTC 8237 / Type A), this protein is Small ribosomal subunit protein uS2.